A 432-amino-acid polypeptide reads, in one-letter code: Enolase 1 (432 aa).

A (2R)-2-phosphoglycerate-binding site is contributed by Q163. The active-site Proton donor is the E205. The Mg(2+) site is built by D242, E287, and D314. Residues K339, R368, S369, and K390 each contribute to the (2R)-2-phosphoglycerate site. The active-site Proton acceptor is the K339.

The protein belongs to the enolase family. Requires Mg(2+) as cofactor.

The protein resides in the cytoplasm. It localises to the secreted. It is found in the cell surface. It catalyses the reaction (2R)-2-phosphoglycerate = phosphoenolpyruvate + H2O. It functions in the pathway carbohydrate degradation; glycolysis; pyruvate from D-glyceraldehyde 3-phosphate: step 4/5. Catalyzes the reversible conversion of 2-phosphoglycerate (2-PG) into phosphoenolpyruvate (PEP). It is essential for the degradation of carbohydrates via glycolysis. The protein is Enolase 1 of Lactobacillus johnsonii (strain CNCM I-12250 / La1 / NCC 533).